The primary structure comprises 887 residues: Putative RNA-binding protein 15B (887 aa).

The disordered stretch occupies residues 1–132 (MKRQSERDSS…EPAGPGSTAA (132 aa)). Residues 10–20 (SPSGRGSSSSA) are compositionally biased toward low complexity. 2 stretches are compositionally biased toward basic and acidic residues: residues 22 to 34 (RPRE…EAGG) and 65 to 77 (GHRD…DANH). The segment covering 83–94 (RSSGAPGGGGRT) has biased composition (gly residues). Over residues 95–110 (GKASGDPGAGGASPRA) the composition is skewed to low complexity. Residues Ser107 and Ser111 each carry the phosphoserine modification. A compositionally biased stretch (pro residues) spans 111 to 122 (SPLPPPPPPPGA). Over residues 123 to 132 (EPAGPGSTAA) the composition is skewed to low complexity. Positions 136 to 216 (KTLLISSLSP…RPLKVEPVYL (81 aa)) constitute an RRM 1 domain. Lys210 participates in a covalent cross-link: Glycyl lysine isopeptide (Lys-Gly) (interchain with G-Cter in SUMO2). The disordered stretch occupies residues 215-249 (YLRGGGSSRRSSSSSAAASTPPPGPPAPADPLGYL). Low complexity predominate over residues 222–233 (SRRSSSSSAAAS). The segment covering 234–243 (TPPPGPPAPA) has biased composition (pro residues). 2 positions are modified to phosphoserine: Ser261 and Ser263. RRM domains are found at residues 333–410 (RNLF…YGKA) and 414–488 (TRLW…FAKA). Thr529 is subject to Phosphothreonine. Phosphoserine is present on residues Ser549, Ser553, and Ser559. Residues 549 to 703 (SLSKSSDRRN…TLEEPKHETK (155 aa)) form a disordered region. Basic and acidic residues-rich tracts occupy residues 570 to 613 (RSGE…ERSR), 623 to 643 (RGSD…EGTK), and 668 to 700 (EAPD…EPKH). Residues 590–594 (RRKRR) carry the Nuclear localization signal motif. Lys699 is covalently cross-linked (Glycyl lysine isopeptide (Lys-Gly) (interchain with G-Cter in SUMO2)). An SPOC domain is found at 708-886 (LSEYAQTLQL…HMVIVIVRDT (179 aa)). The tract at residues 719 to 887 (WNGLLVLKNS…MVIVIVRDTA (169 aa)) is interaction with Epstein-Barr virus BMLF1.

The protein belongs to the RRM Spen family. Component of the WMM complex, a N6-methyltransferase complex composed of a catalytic subcomplex, named MAC, and of an associated subcomplex, named MACOM. The MAC subcomplex is composed of METTL3 and METTL14. The MACOM subcomplex is composed of WTAP, ZC3H13, CBLL1/HAKAI, VIRMA, and, in some cases of RBM15 (RBM15 or RBM15B). May interact with NCOR2. Interacts with NXF1, the interaction is required to promote mRNA export.

Its subcellular location is the nucleus. The protein localises to the nucleoplasm. It is found in the nucleus speckle. It localises to the nucleus envelope. Functionally, RNA-binding protein that acts as a key regulator of N6-methyladenosine (m6A) methylation of RNAs, thereby regulating different processes, such as alternative splicing of mRNAs and X chromosome inactivation mediated by Xist RNA. Associated component of the WMM complex, a complex that mediates N6-methyladenosine (m6A) methylation of RNAs, a modification that plays a role in the efficiency of mRNA splicing and RNA processing. Plays a key role in m6A methylation, possibly by binding target RNAs and recruiting the WMM complex. Involved in random X inactivation mediated by Xist RNA: acts by binding Xist RNA and recruiting the WMM complex, which mediates m6A methylation, leading to target YTHDC1 reader on Xist RNA and promoting transcription repression activity of Xist. Functions in the regulation of alternative or illicit splicing, possibly by regulating m6A methylation. Inhibits pre-mRNA splicing. Also functions as a mRNA export factor by acting as a cofactor for the nuclear export receptor NXF1. The polypeptide is Putative RNA-binding protein 15B (Rbm15b) (Mus musculus (Mouse)).